The chain runs to 214 residues: Redox-sensing transcriptional repressor Rex (214 aa).

The H-T-H motif DNA-binding region spans 16–55 (IYFRYLNVLKDANKQRVSSTELSEAVQVDSATIRRDFSYF). Position 90 to 95 (90 to 95 (GVGSLG)) interacts with NAD(+).

This sequence belongs to the transcriptional regulatory Rex family. Homodimer.

It is found in the cytoplasm. In terms of biological role, modulates transcription in response to changes in cellular NADH/NAD(+) redox state. The polypeptide is Redox-sensing transcriptional repressor Rex (Limosilactobacillus reuteri (strain DSM 20016) (Lactobacillus reuteri)).